Reading from the N-terminus, the 1064-residue chain is Serine protease inhibitor Kazal-type 5 (1064 aa).

The signal sequence occupies residues 1–22 (MKIATVSVLLPLALCLIQDAAS). The Kazal-like 1; atypical domain occupies 28–66 (EMCHEFQAFMKNGKLFCPQDKKFFQSLDGIMFINKCATC). 21 cysteine pairs are disulfide-bonded: C30–C66, C44–C63, C97–C133, C111–C130, C119–C151, C161–C197, C175–C194, C225–C261, C239–C258, C297–C333, C311–C330, C367–C403, C381–C400, C437–C473, C451–C470, C496–C532, C510–C529, C567–C603, C581–C600, C632–C668, and C646–C665. 14 consecutive Kazal-like domains span residues 91 to 153 (APTE…ECKS), 155 to 216 (NPEQ…ETRI), 219 to 285 (NAEK…KAEE), 291 to 352 (REIV…ARAR), 361 to 423 (TSYA…KSRN), 431 to 489 (ASFE…KAKR), 490 to 551 (EAAK…EEKG), 561 to 622 (EAVQ…PRAK), 626 to 688 (EAEK…EDQR), 701 to 757 (GNTQ…KNEY), 768 to 830 (ESGK…EDRS), 843 to 905 (NDKE…EKSS), 910 to 971 (NNAK…EKPS), and 987 to 1048 (SLDS…KCEE). Residues 676 to 688 (NEERKRKEEEDQR) show a composition bias toward basic and acidic residues. The disordered stretch occupies residues 676–705 (NEERKRKEEEDQRNAAGHGSSGGGGGNTQD). Disulfide bonds link C707/C743, C721/C740, C774/C810, C788/C807, C849/C885, and C863/C882. Residues 751–775 (AERKNEYSRSRSNGTGSESGKDTCD) form a disordered region. A disordered region spans residues 818–849 (AAEKKKKEDEDRSNTGERSNTGERSNDKEDLC). Residues 895 to 905 (ERKKKDEEKSS) are compositionally biased toward basic and acidic residues. Residues 895–915 (ERKKKDEEKSSSKPSNNAKDE) are disordered. Intrachain disulfides connect C916–C952 and C930–C949. Residues 967–977 (QEKPSHVRASQ) show a composition bias toward basic and acidic residues. The tract at residues 967 to 987 (QEKPSHVRASQEEDSPDSFSS) is disordered. Disulfide bonds link C993–C1028, C1006–C1025, and C1014–C1046. The tract at residues 1041 to 1064 (RSTGKCEESSTPGTTAASMPPSDE) is disordered.

In terms of processing, proteolytically processed by furin in individual domains (D1, D5, D6, D8 through D11, and D9 through D15) exhibiting various inhibitory potentials for multiple proteases. As to expression, highly expressed in the thymus and stratum corneum. Also found in the oral mucosa, parathyroid gland, Bartholin's glands, tonsils, and vaginal epithelium. Very low levels are detected in lung, kidney, and prostate.

Its subcellular location is the secreted. In terms of biological role, serine protease inhibitor, probably important for the anti-inflammatory and/or antimicrobial protection of mucous epithelia. Contribute to the integrity and protective barrier function of the skin by regulating the activity of defense-activating and desquamation-involved proteases. Inhibits KLK5, it's major target, in a pH-dependent manner. Inhibits KLK7, KLK14 CASP14, and trypsin. The protein is Serine protease inhibitor Kazal-type 5 (SPINK5) of Homo sapiens (Human).